The following is a 414-amino-acid chain: Ribulose bisphosphate carboxylase/oxygenase activase (414 aa).

ATP is bound at residue 37 to 44 (GRKGEGKT). The segment at 296–326 (RGYQTAPPPEAPVIQPVNNSSHKQKTSNTHL) is disordered. The span at 311 to 326 (PVNNSSHKQKTSNTHL) shows a compositional bias: polar residues.

It belongs to the RuBisCO activase family.

Activation of RuBisCO (ribulose-1,5-bisohosphate carboxylase/oxygenase; EC 4.1.1.39) involves the ATP-dependent carboxylation of the epsilon-amino group of lysine leading to a carbamate structure. The protein is Ribulose bisphosphate carboxylase/oxygenase activase (rca) of Nostoc sp. (strain PCC 7120 / SAG 25.82 / UTEX 2576).